A 347-amino-acid polypeptide reads, in one-letter code: Putative ORC1-type DNA replication protein 1 (347 aa).

Residues 34–38 (TGKTV), Y167, and R179 each bind ATP.

This sequence belongs to the CDC6/cdc18 family.

Its function is as follows. Involved in regulation of DNA replication. Has no effect on MCM helicase activity, either stimulatory or inhibitory. Does not bind DNA. The sequence is that of Putative ORC1-type DNA replication protein 1 (cdc6-1) from Thermoplasma acidophilum (strain ATCC 25905 / DSM 1728 / JCM 9062 / NBRC 15155 / AMRC-C165).